Reading from the N-terminus, the 234-residue chain is 7-cyano-7-deazaguanine synthase (234 aa).

An ATP-binding site is contributed by 15 to 25 (LSGGLDSSTCL). Residues Cys-199, Cys-208, Cys-211, and Cys-214 each coordinate Zn(2+).

The protein belongs to the QueC family. Requires Zn(2+) as cofactor.

It carries out the reaction 7-carboxy-7-deazaguanine + NH4(+) + ATP = 7-cyano-7-deazaguanine + ADP + phosphate + H2O + H(+). The protein operates within purine metabolism; 7-cyano-7-deazaguanine biosynthesis. Catalyzes the ATP-dependent conversion of 7-carboxy-7-deazaguanine (CDG) to 7-cyano-7-deazaguanine (preQ(0)). In Anaeromyxobacter dehalogenans (strain 2CP-C), this protein is 7-cyano-7-deazaguanine synthase.